We begin with the raw amino-acid sequence, 293 residues long: Homoserine kinase (293 aa).

An ATP-binding site is contributed by 80-90 (RPASGLGSSAA).

This sequence belongs to the GHMP kinase family. Homoserine kinase subfamily.

It localises to the cytoplasm. It catalyses the reaction L-homoserine + ATP = O-phospho-L-homoserine + ADP + H(+). The protein operates within amino-acid biosynthesis; L-threonine biosynthesis; L-threonine from L-aspartate: step 4/5. Catalyzes the ATP-dependent phosphorylation of L-homoserine to L-homoserine phosphate. The chain is Homoserine kinase from Halorubrum lacusprofundi (strain ATCC 49239 / DSM 5036 / JCM 8891 / ACAM 34).